Consider the following 106-residue polypeptide: Large ribosomal subunit protein eL42Q (106 aa).

This sequence belongs to the eukaryotic ribosomal protein eL42 family.

This Candida maltosa (Yeast) protein is Large ribosomal subunit protein eL42Q (RIM-C).